Consider the following 213-residue polypeptide: uncharacterized protein (213 aa).

This is an uncharacterized protein from Bacillus subtilis (strain 168).